The chain runs to 736 residues: Phosphoribosylformylglycinamidine synthase subunit PurL (736 aa).

H48 is an active-site residue. The ATP site is built by Y51 and K90. E92 contributes to the Mg(2+) binding site. Substrate-binding positions include 93–96 and R115; that span reads SHNH. The Proton acceptor role is filled by H94. A Mg(2+)-binding site is contributed by D116. Q239 is a substrate binding site. A Mg(2+)-binding site is contributed by D267. 311–313 is a substrate binding site; that stretch reads ESQ. ATP is bound by residues D492 and G529. N530 is a binding site for Mg(2+). Residue S532 participates in substrate binding.

The protein belongs to the FGAMS family. In terms of assembly, monomer. Part of the FGAM synthase complex composed of 1 PurL, 1 PurQ and 2 PurS subunits.

It localises to the cytoplasm. The catalysed reaction is N(2)-formyl-N(1)-(5-phospho-beta-D-ribosyl)glycinamide + L-glutamine + ATP + H2O = 2-formamido-N(1)-(5-O-phospho-beta-D-ribosyl)acetamidine + L-glutamate + ADP + phosphate + H(+). The protein operates within purine metabolism; IMP biosynthesis via de novo pathway; 5-amino-1-(5-phospho-D-ribosyl)imidazole from N(2)-formyl-N(1)-(5-phospho-D-ribosyl)glycinamide: step 1/2. Functionally, part of the phosphoribosylformylglycinamidine synthase complex involved in the purines biosynthetic pathway. Catalyzes the ATP-dependent conversion of formylglycinamide ribonucleotide (FGAR) and glutamine to yield formylglycinamidine ribonucleotide (FGAM) and glutamate. The FGAM synthase complex is composed of three subunits. PurQ produces an ammonia molecule by converting glutamine to glutamate. PurL transfers the ammonia molecule to FGAR to form FGAM in an ATP-dependent manner. PurS interacts with PurQ and PurL and is thought to assist in the transfer of the ammonia molecule from PurQ to PurL. The sequence is that of Phosphoribosylformylglycinamidine synthase subunit PurL from Beijerinckia indica subsp. indica (strain ATCC 9039 / DSM 1715 / NCIMB 8712).